The sequence spans 568 residues: Phosphoribosylaminoimidazole carboxylase (568 aa).

The ATP-grasp domain maps to K110 to T298. G138–A193 is an ATP binding site.

In the C-terminal section; belongs to the AIR carboxylase family. Class I subfamily.

It catalyses the reaction 5-amino-1-(5-phospho-D-ribosyl)imidazole-4-carboxylate + H(+) = 5-amino-1-(5-phospho-beta-D-ribosyl)imidazole + CO2. It participates in purine metabolism; IMP biosynthesis via de novo pathway; 5-amino-1-(5-phospho-D-ribosyl)imidazole-4-carboxylate from 5-amino-1-(5-phospho-D-ribosyl)imidazole (carboxylase route): step 1/1. The protein is Phosphoribosylaminoimidazole carboxylase (ADE2) of Candida albicans (strain SC5314 / ATCC MYA-2876) (Yeast).